The sequence spans 652 residues: DNA ligase (652 aa).

Residues 29–33 (DSEYD), 78–79 (SL), and E107 contribute to the NAD(+) site. Residue K109 is the N6-AMP-lysine intermediate of the active site. NAD(+) is bound by residues R130, E164, K278, and K302. Zn(2+) is bound by residues C395, C398, C413, and C418. Residues 577 to 652 (VADAALSGLT…VRDEAWLESL (76 aa)) form the BRCT domain.

Belongs to the NAD-dependent DNA ligase family. LigA subfamily. The cofactor is Mg(2+). Requires Mn(2+) as cofactor.

It carries out the reaction NAD(+) + (deoxyribonucleotide)n-3'-hydroxyl + 5'-phospho-(deoxyribonucleotide)m = (deoxyribonucleotide)n+m + AMP + beta-nicotinamide D-nucleotide.. In terms of biological role, DNA ligase that catalyzes the formation of phosphodiester linkages between 5'-phosphoryl and 3'-hydroxyl groups in double-stranded DNA using NAD as a coenzyme and as the energy source for the reaction. It is essential for DNA replication and repair of damaged DNA. The polypeptide is DNA ligase (Streptococcus pneumoniae (strain 70585)).